The sequence spans 166 residues: MIDIAFSKLAIIGVAALVFIGPEKLPTVARMAGTLFGRAQRYINDVKSEVSREMELDELRKMHKDVQDAATDVERSIAQNISAADSSLHSAWDESDTDTNPLMEPPTLDQSSDKSKNFRKKKLAATSAVPSWYKRQSGQKSRVISGAARMAKFRPASARKSTPFFH.

Residues 1-21 (MIDIAFSKLAIIGVAALVFIG) form a helical membrane-spanning segment. A disordered region spans residues 85-146 (DSSLHSAWDE…SGQKSRVISG (62 aa)).

This sequence belongs to the TatB family. In terms of assembly, the Tat system comprises two distinct complexes: a TatABC complex, containing multiple copies of TatA, TatB and TatC subunits, and a separate TatA complex, containing only TatA subunits. Substrates initially bind to the TatABC complex, which probably triggers association of the separate TatA complex to form the active translocon.

The protein resides in the cell inner membrane. Functionally, part of the twin-arginine translocation (Tat) system that transports large folded proteins containing a characteristic twin-arginine motif in their signal peptide across membranes. Together with TatC, TatB is part of a receptor directly interacting with Tat signal peptides. TatB may form an oligomeric binding site that transiently accommodates folded Tat precursor proteins before their translocation. The polypeptide is Sec-independent protein translocase protein TatB (Herminiimonas arsenicoxydans).